We begin with the raw amino-acid sequence, 723 residues long: Probable cadmium-transporting ATPase (723 aa).

An HMA domain is found at 12–75 (EMKAYRVQGF…AGAFENLKVT (64 aa)). Cd(2+) is bound by residues Cys23 and Cys26. A run of 5 helical transmembrane segments spans residues 103-123 (STLL…YVNG), 127-147 (IVTT…LFKV), 168-188 (IGGA…LFAI), 329-349 (YYTP…PLFF), and 361-381 (LAVL…ISIV). Asp412 serves as the catalytic 4-aspartylphosphate intermediate. The next 2 membrane-spanning stretches (helical) occupy residues 671–690 (IIKA…LLLV) and 694–716 (WLTL…LNGL).

This sequence belongs to the cation transport ATPase (P-type) (TC 3.A.3) family. Type IB subfamily.

It is found in the cell membrane. It catalyses the reaction Cd(2+)(in) + ATP + H2O = Cd(2+)(out) + ADP + phosphate + H(+). In terms of biological role, couples the hydrolysis of ATP with the export of cadmium. The protein is Probable cadmium-transporting ATPase (cadA) of Alkalihalophilus pseudofirmus (strain ATCC BAA-2126 / JCM 17055 / OF4) (Bacillus pseudofirmus).